A 248-amino-acid polypeptide reads, in one-letter code: 4-hydroxy-tetrahydrodipicolinate reductase (248 aa).

NAD(+) is bound by residues 9–14 (GAKGRV), 77–79 (GTT), and 104–107 (APNF). H134 functions as the Proton donor/acceptor in the catalytic mechanism. H135 contacts (S)-2,3,4,5-tetrahydrodipicolinate. Residue K138 is the Proton donor of the active site. 144 to 145 (GT) is a (S)-2,3,4,5-tetrahydrodipicolinate binding site.

This sequence belongs to the DapB family.

It localises to the cytoplasm. The enzyme catalyses (S)-2,3,4,5-tetrahydrodipicolinate + NAD(+) + H2O = (2S,4S)-4-hydroxy-2,3,4,5-tetrahydrodipicolinate + NADH + H(+). It catalyses the reaction (S)-2,3,4,5-tetrahydrodipicolinate + NADP(+) + H2O = (2S,4S)-4-hydroxy-2,3,4,5-tetrahydrodipicolinate + NADPH + H(+). It functions in the pathway amino-acid biosynthesis; L-lysine biosynthesis via DAP pathway; (S)-tetrahydrodipicolinate from L-aspartate: step 4/4. Catalyzes the conversion of 4-hydroxy-tetrahydrodipicolinate (HTPA) to tetrahydrodipicolinate. This chain is 4-hydroxy-tetrahydrodipicolinate reductase, found in Corynebacterium efficiens (strain DSM 44549 / YS-314 / AJ 12310 / JCM 11189 / NBRC 100395).